The following is a 1083-amino-acid chain: RecBCD enzyme subunit RecB (1083 aa).

Positions 1 to 323 constitute a UvrD-like helicase ATP-binding domain; sequence MKVFDLLGPL…QTLGTNWRSD (323 aa). Residues 1–704 form a DNA-binding and helicase activity, interacts with RecC region; sequence MKVFDLLGPL…RGRAPGEAIV (704 aa). 21–28 provides a ligand contact to ATP; that stretch reads ASAGTGKT. The UvrD-like helicase C-terminal domain maps to 349–607; that stretch reads VQARHQGHRL…QIMTVWVSKG (259 aa). The interval 765–1083 is nuclease activity, interacts with RecD and RecA; it reads AWKRTSYSGL…LSKLLDAEAP (319 aa). The Mg(2+) site is built by His-830, Asp-962, and Asp-975. The For nuclease activity role is filled by Asp-975.

Belongs to the helicase family. UvrD subfamily. In terms of assembly, heterotrimer of RecB, RecC and RecD. All subunits contribute to DNA-binding. Interacts with RecA. The cofactor is Mg(2+).

The enzyme catalyses Exonucleolytic cleavage (in the presence of ATP) in either 5'- to 3'- or 3'- to 5'-direction to yield 5'-phosphooligonucleotides.. It catalyses the reaction Couples ATP hydrolysis with the unwinding of duplex DNA by translocating in the 3'-5' direction.. It carries out the reaction ATP + H2O = ADP + phosphate + H(+). A helicase/nuclease that prepares dsDNA breaks (DSB) for recombinational DNA repair. Binds to DSBs and unwinds DNA via a highly rapid and processive ATP-dependent bidirectional helicase activity. Holoenzyme degrades any linearized DNA that is unable to undergo homologous recombination. In the holoenzyme this subunit contributes DNA-dependent ATPase activity, exonuclease activity and 3'-5' helicase activity. Unlike the case in E.coli, suppresses RecA-dependent homologous recombination, is instead required for single-strand annealing pathway repair of DSB. The protein is RecBCD enzyme subunit RecB of Mycolicibacterium smegmatis (strain ATCC 700084 / mc(2)155) (Mycobacterium smegmatis).